The sequence spans 743 residues: DEAD-box ATP-dependent RNA helicase 3B, chloroplastic (743 aa).

The transit peptide at 1-37 (MASLTLPALALALSNPGAVRLRAAAFRCWALRRRGWA) directs the protein to the chloroplast. The interval 60-79 (GSDDEDGEGPYGSDADEGFE) is disordered. Residues 61–79 (SDDEDGEGPYGSDADEGFE) are compositionally biased toward acidic residues. The Q motif motif lies at 88–116 (LAIARLGLPDELVATLEKRGITHLFPIQR). One can recognise a Helicase ATP-binding domain in the interval 119 to 295 (LIPALEGRDL…RRYLNNPLTI (177 aa)). 132–139 (AKTGTGKT) lines the ATP pocket. The DEAD box motif lies at 243–246 (DEAD). Residues 324–469 (VLSDLITVYA…ISPPSIEEVL (146 aa)) enclose the Helicase C-terminal domain. The segment at 606–719 (LTKISKLPAL…RSSSFGGRES (114 aa)) is disordered. The segment covering 642 to 653 (GGGASRGRGGWD) has biased composition (gly residues). Over residues 657–671 (EDRFRRGGRSLRSDN) the composition is skewed to basic and acidic residues. Over residues 688 to 719 (RSSSFGSRSSSYSSRGSPSFGGRSSSFGGRES) the composition is skewed to low complexity. A CCHC-type zinc finger spans residues 725-742 (GACFNCGESGHRATDCPN).

It belongs to the DEAD box helicase family. DDX21/DDX50 subfamily.

The protein localises to the plastid. Its subcellular location is the chloroplast stroma. The catalysed reaction is ATP + H2O = ADP + phosphate + H(+). Functionally, nuclear genome-encoded factor involved in ribosome biogenesis in chloroplasts. Binds specific group II introns in chloroplasts and facilitates their splicing. Is required for rRNA maturation in plastids and may contribute to the assembly of the large (50S) ribosomal subunit. Required for normal development of chloroplasts. This Zea mays (Maize) protein is DEAD-box ATP-dependent RNA helicase 3B, chloroplastic.